Here is a 213-residue protein sequence, read N- to C-terminus: Elongation factor 1-beta (213 aa).

Residues 67 to 80 show a composition bias toward low complexity; sequence AGKAPAASGSAAAA. The disordered stretch occupies residues 67–88; the sequence is AGKAPAASGSAAAAAEEEDDED.

This sequence belongs to the EF-1-beta/EF-1-delta family. As to quaternary structure, EF-1 is composed of 4 subunits: alpha, beta, delta, and gamma.

Functionally, EF-1-beta and EF-1-delta stimulate the exchange of GDP bound to EF-1-alpha to GTP. The chain is Elongation factor 1-beta (EFB1) from Candida albicans (strain WO-1) (Yeast).